Consider the following 426-residue polypeptide: Mothers against decapentaplegic homolog 7 (426 aa).

The tract at residues 13–55 (LWRSRAPGGEDEEEGAGGGGGGGELRGEGATDSRAHGAGGGGP) is disordered. Over residues 37–47 (LRGEGATDSRA) the composition is skewed to basic and acidic residues. An N6-acetyllysine; alternate mark is found at Lys-64 and Lys-70. Residues Lys-64 and Lys-70 each participate in a glycyl lysine isopeptide (Lys-Gly) (interchain with G-Cter in ubiquitin); alternate cross-link. In terms of domain architecture, MH1 spans 64 to 207 (KAVRGAKGHH…LSRLCELESP (144 aa)). The Zn(2+) site is built by Cys-125, Cys-180, Cys-192, and His-197. A PY-motif motif is present at residues 208-211 (PPPY). Residues 208–217 (PPPYSRYPMD) are important for interaction with SMURF2. Ser-249 carries the post-translational modification Phosphoserine. Residues 261 to 426 (WCVVAYWEEK…CWLEVIFNSR (166 aa)) enclose the MH2 domain.

It belongs to the dwarfin/SMAD family. In terms of assembly, interacts with WWP1. Interacts with COPS5. Interacts with NEDD4L. Interacts with STAMBP. Interacts with RNF111, AXIN1 and AXIN2. Interacts with PPP1R15A. Interacts (via MH2 domain) with EP300. Interacts with ACVR1B, SMURF1, SMURF2 and TGFBR1; SMAD7 recruits SMURF1 and SMURF2 to the TGF-beta receptor and regulates its degradation. Interacts with PDPK1 (via PH domain). Interacts with TSC22D1/TSC-22; the interaction requires TGF-beta and the interaction is inhibited by TGFBR1. Phosphorylation on Ser-249 does not affect its stability, nuclear localization or inhibitory function in TGFB signaling; however it affects its ability to regulate transcription. Phosphorylated by PDPK1. In terms of processing, ubiquitinated by WWP1. Polyubiquitinated by RNF111, which is enhanced by AXIN1 and promotes proteasomal degradation. In response to TGF-beta, ubiquitinated by SMURF1; which promotes its degradation. Post-translationally, acetylation prevents ubiquitination and degradation mediated by SMURF1. As to expression, ubiquitous with higher expression in the lung and vascular endothelium.

It is found in the nucleus. The protein resides in the cytoplasm. In terms of biological role, antagonist of signaling by TGF-beta (transforming growth factor) type 1 receptor superfamily members; has been shown to inhibit TGF-beta (Transforming growth factor) and activin signaling by associating with their receptors thus preventing SMAD2 access. Functions as an adapter to recruit SMURF2 to the TGF-beta receptor complex. Also acts by recruiting the PPP1R15A-PP1 complex to TGFBR1, which promotes its dephosphorylation. Positively regulates PDPK1 kinase activity by stimulating its dissociation from the 14-3-3 protein YWHAQ which acts as a negative regulator. The polypeptide is Mothers against decapentaplegic homolog 7 (SMAD7) (Homo sapiens (Human)).